A 208-amino-acid polypeptide reads, in one-letter code: N-(5'-phosphoribosyl)anthranilate isomerase (208 aa).

It belongs to the TrpF family.

It carries out the reaction N-(5-phospho-beta-D-ribosyl)anthranilate = 1-(2-carboxyphenylamino)-1-deoxy-D-ribulose 5-phosphate. It participates in amino-acid biosynthesis; L-tryptophan biosynthesis; L-tryptophan from chorismate: step 3/5. The protein is N-(5'-phosphoribosyl)anthranilate isomerase of Neisseria meningitidis serogroup A / serotype 4A (strain DSM 15465 / Z2491).